A 432-amino-acid chain; its full sequence is Amino-acid acetyltransferase (432 aa).

In terms of domain architecture, N-acetyltransferase spans 286 to 425 (ERVREAAIED…ASLYNYQRNS (140 aa)).

It belongs to the acetyltransferase family. ArgA subfamily.

Its subcellular location is the cytoplasm. It catalyses the reaction L-glutamate + acetyl-CoA = N-acetyl-L-glutamate + CoA + H(+). The protein operates within amino-acid biosynthesis; L-arginine biosynthesis; N(2)-acetyl-L-ornithine from L-glutamate: step 1/4. In Pseudomonas fluorescens (strain ATCC BAA-477 / NRRL B-23932 / Pf-5), this protein is Amino-acid acetyltransferase.